A 518-amino-acid polypeptide reads, in one-letter code: Phytoene desaturase (neurosporene-forming) (518 aa).

FAD is bound at residue 14–47; sequence LVIGSGLGGLAAAMRLGAKGWRVTVIDKLDVPGG.

It belongs to the carotenoid/retinoid oxidoreductase family. FAD is required as a cofactor.

The enzyme catalyses 15-cis-phytoene + 3 A = all-trans-neurosporene + 3 AH2. It participates in carotenoid biosynthesis. Functionally, converts phytoene into all-trans-neurosporene as the major product, via the intermediary of phytofluene and zeta-carotene, by the introduction of three double bonds. The protein is Phytoene desaturase (neurosporene-forming) (crtI) of Cereibacter sphaeroides (strain ATCC 17023 / DSM 158 / JCM 6121 / CCUG 31486 / LMG 2827 / NBRC 12203 / NCIMB 8253 / ATH 2.4.1.) (Rhodobacter sphaeroides).